Reading from the N-terminus, the 107-residue chain is Thioredoxin (107 aa).

A Thioredoxin domain is found at Ala2–Arg107. An intrachain disulfide couples Cys33 to Cys36.

This sequence belongs to the thioredoxin family.

In terms of biological role, component of the thioredoxin-thioredoxin reductase system. Participates in various redox reactions through the reversible oxidation of its active center dithiol to a disulfide and catalyzes dithiol-disulfide exchange reactions. The chain is Thioredoxin (trxA) from Streptomyces clavuligerus.